Here is a 93-residue protein sequence, read N- to C-terminus: MLFFSYFKDLVGQEVTVELKNDLAIRGTLHSVDQYLNIKLENTRVVDQDKYPHMLSVRNCFIRGSVVRYVQLPKDGVDVDLLHDAARREARGG.

In terms of domain architecture, Sm spans 2–76; that stretch reads LFFSYFKDLV…VRYVQLPKDG (75 aa).

Belongs to the snRNP Sm proteins family. As to quaternary structure, component of the heptameric LSM1-LSM7 complex that forms a seven-membered ring structure with a donut shape. The LSM subunits are arranged in the order LSM1, LSM2, LSM3, LSM6, LSM5, LSM7 and LSM4. LSM2 subunit interacts only with its two neighboring subunits, LSM1A or LSM1B and LSM3A or LSM3B. Component of the heptameric LSM2-LSM8 complex that forms a seven-membered ring structure with a donut shape. The LSM subunits are arranged in the order LSM8, LSM2, LSM3, LSM6, LSM5, LSM7 and LSM4. LSM2 subunit interacts only with its two neighboring subunits, LSM8 and LSM3A or LSM3B. As to expression, expressed in roots, leaves, stems, flowers and siliques.

It localises to the cytoplasm. It is found in the nucleus. Its function is as follows. Component of LSM protein complexes, which are involved in RNA processing. Component of the cytoplasmic LSM1-LSM7 complex which is involved in mRNA degradation by promoting decapping and leading to accurate 5'-3' mRNA decay. The cytoplasmic LSM1-LSM7 complex regulates developmental gene expression by the decapping of specific development-related transcripts. Component of the nuclear LSM2-LSM8 complex which is involved splicing nuclear mRNAs. LSM2-LSM8 binds directly to the U6 small nuclear RNAs (snRNAs) and is essential for accurate splicing of selected development-related mRNAs through the stabilization of the spliceosomal U6 snRNA. Plays a critical role in the regulation of development-related gene expression. In Arabidopsis thaliana (Mouse-ear cress), this protein is Sm-like protein LSM2.